The sequence spans 171 residues: Large ribosomal subunit protein bL17 (171 aa).

A disordered region spans residues 130-171 (PGYKKSKGKKATKAKGKKAKATPAAEAAAAATTEAAPAEEKK). Over residues 133–149 (KKSKGKKATKAKGKKAK) the composition is skewed to basic residues. Over residues 150 to 165 (ATPAAEAAAAATTEAA) the composition is skewed to low complexity.

This sequence belongs to the bacterial ribosomal protein bL17 family. Part of the 50S ribosomal subunit. Contacts protein L32.

In Opitutus terrae (strain DSM 11246 / JCM 15787 / PB90-1), this protein is Large ribosomal subunit protein bL17.